Consider the following 271-residue polypeptide: MLLTVDVRNTNIVLGLFTGSGEHSKLVQDWRMRTDARMTADELALIFRGLLGAHTDQITGVSALSTVPSVLREIRVMLTRYWGHVPHVLVEPGVRTGVPLLVDNPKEVGADRIVNSLAAHHLYDAPCIVVDFGTSTCVDVVSAKGEFLGGAIAPGLEISSDALASQSAALRKVELVRPRSVVGKNTVECMQSGAVFGFAGLVDGLVRRVRKELPAFSGSDVVVIATGDRAPLIMPETETVDEHEPDLTLEGLRLVYERNQARRGARRSPLE.

ATP is bound at residue 6–13; it reads DVRNTNIV. Position 109-112 (109-112) interacts with substrate; sequence GADR. The Proton acceptor role is filled by D111. D131 contributes to the K(+) binding site. T134 is an ATP binding site. Substrate is bound at residue T186.

This sequence belongs to the type III pantothenate kinase family. In terms of assembly, homodimer. Requires NH4(+) as cofactor. The cofactor is K(+).

Its subcellular location is the cytoplasm. The enzyme catalyses (R)-pantothenate + ATP = (R)-4'-phosphopantothenate + ADP + H(+). It functions in the pathway cofactor biosynthesis; coenzyme A biosynthesis; CoA from (R)-pantothenate: step 1/5. Its function is as follows. Catalyzes the phosphorylation of pantothenate (Pan), the first step in CoA biosynthesis. The protein is Type III pantothenate kinase of Rhodococcus jostii (strain RHA1).